The following is a 294-amino-acid chain: 4-hydroxy-tetrahydrodipicolinate synthase (294 aa).

Thr-47 is a pyruvate binding site. Tyr-136 functions as the Proton donor/acceptor in the catalytic mechanism. Lys-164 (schiff-base intermediate with substrate) is an active-site residue. A pyruvate-binding site is contributed by Val-206.

Belongs to the DapA family. In terms of assembly, homotetramer; dimer of dimers.

It localises to the cytoplasm. The catalysed reaction is L-aspartate 4-semialdehyde + pyruvate = (2S,4S)-4-hydroxy-2,3,4,5-tetrahydrodipicolinate + H2O + H(+). Its pathway is amino-acid biosynthesis; L-lysine biosynthesis via DAP pathway; (S)-tetrahydrodipicolinate from L-aspartate: step 3/4. Its function is as follows. Catalyzes the condensation of (S)-aspartate-beta-semialdehyde [(S)-ASA] and pyruvate to 4-hydroxy-tetrahydrodipicolinate (HTPA). This is 4-hydroxy-tetrahydrodipicolinate synthase from Acaryochloris marina (strain MBIC 11017).